The following is a 290-amino-acid chain: Ribonuclease HIII (290 aa).

The RNase H type-2 domain occupies 78–290 (LPLIGTDEVG…FKNTEKAKNA (213 aa)). Asp-84, Glu-85, and Asp-187 together coordinate a divalent metal cation.

The protein belongs to the RNase HII family. RnhC subfamily. The cofactor is Mn(2+). Mg(2+) is required as a cofactor.

Its subcellular location is the cytoplasm. The enzyme catalyses Endonucleolytic cleavage to 5'-phosphomonoester.. Its function is as follows. Endonuclease that specifically degrades the RNA of RNA-DNA hybrids. The sequence is that of Ribonuclease HIII from Streptococcus pneumoniae (strain CGSP14).